The following is a 276-amino-acid chain: Large ribosomal subunit protein uL2 (276 aa).

Disordered stretches follow at residues 29–54 (PEKS…SRRR) and 224–276 (AMNP…RGQR). Positions 256 to 276 (YKTRSKKKPSSKLIVKRRGQR) are enriched in basic residues.

This sequence belongs to the universal ribosomal protein uL2 family. As to quaternary structure, part of the 50S ribosomal subunit. Forms a bridge to the 30S subunit in the 70S ribosome.

Functionally, one of the primary rRNA binding proteins. Required for association of the 30S and 50S subunits to form the 70S ribosome, for tRNA binding and peptide bond formation. It has been suggested to have peptidyltransferase activity; this is somewhat controversial. Makes several contacts with the 16S rRNA in the 70S ribosome. The sequence is that of Large ribosomal subunit protein uL2 from Maridesulfovibrio salexigens (strain ATCC 14822 / DSM 2638 / NCIMB 8403 / VKM B-1763) (Desulfovibrio salexigens).